A 259-amino-acid chain; its full sequence is Ribosomal RNA small subunit methyltransferase A (259 aa).

Positions 12, 14, 39, 60, 84, and 102 each coordinate S-adenosyl-L-methionine.

This sequence belongs to the class I-like SAM-binding methyltransferase superfamily. rRNA adenine N(6)-methyltransferase family. RsmA subfamily.

It localises to the cytoplasm. It carries out the reaction adenosine(1518)/adenosine(1519) in 16S rRNA + 4 S-adenosyl-L-methionine = N(6)-dimethyladenosine(1518)/N(6)-dimethyladenosine(1519) in 16S rRNA + 4 S-adenosyl-L-homocysteine + 4 H(+). Specifically dimethylates two adjacent adenosines (A1518 and A1519) in the loop of a conserved hairpin near the 3'-end of 16S rRNA in the 30S particle. May play a critical role in biogenesis of 30S subunits. The protein is Ribosomal RNA small subunit methyltransferase A of Nitrosospira multiformis (strain ATCC 25196 / NCIMB 11849 / C 71).